The sequence spans 66 residues: Large ribosomal subunit protein bL35 (66 aa).

Residues 1–26 (MPKMKTHRGSAKRFKKTASGKLKRGH) are compositionally biased toward basic residues. Positions 1-28 (MPKMKTHRGSAKRFKKTASGKLKRGHAY) are disordered.

It belongs to the bacterial ribosomal protein bL35 family.

The protein is Large ribosomal subunit protein bL35 of Geobacillus thermodenitrificans (strain NG80-2).